The chain runs to 232 residues: Large ribosomal subunit protein uL1 (232 aa).

This sequence belongs to the universal ribosomal protein uL1 family. As to quaternary structure, part of the 50S ribosomal subunit.

In terms of biological role, binds directly to 23S rRNA. The L1 stalk is quite mobile in the ribosome, and is involved in E site tRNA release. Functionally, protein L1 is also a translational repressor protein, it controls the translation of the L11 operon by binding to its mRNA. This chain is Large ribosomal subunit protein uL1, found in Variovorax paradoxus (strain S110).